The sequence spans 497 residues: MEKSWFNLILSKGELEYRCGLSKSMDSRLGPVENTTVNEDPTRNDTDKNIHDCSDSSSYYSKVDHLVDVKDIRNFISDDTFLIRDSNQDRYSIYFDSENQIFELNNDHSFLSELESFFYSYHNSSYMNNGSKNDEPHYHFNLYDNDTNCGWNNHINSCIDSYLRSQICIDSSILSGSDNSNDNYISNYICGEGGNSSEGKNFDIITRENGNDLTLKESSNDLDLYKDLWVQCECENCYGVNYKKSLNSKMNICEQCGYHLKMRSSDRIELSIDPGTWGPMDEDMISLDPIEFQSEEELYKDRIDFYQRKTGLTEAIQTGTGQLNGIPIAIGVMDFQFMGGSMGSVVGEKITRLIEYATNNFLPLILVCASGGARMQEGSLSLMQMAKISSALYDYQSNKKLFYVSILTSPTTGGVTASFGMLGDIIIAEPNAYIAFAGKRVIEQTLNKTIPEGSQAAEYLFHKGLFDPIVPRNPLKGVLSELVQLHGFFPLNQNSIK.

Positions 30 to 50 (GPVENTTVNEDPTRNDTDKNI) are disordered. The span at 40-50 (DPTRNDTDKNI) shows a compositional bias: basic and acidic residues. Residues 230–497 (VQCECENCYG…FFPLNQNSIK (268 aa)) form the CoA carboxyltransferase N-terminal domain. 4 residues coordinate Zn(2+): Cys232, Cys237, Cys253, and Cys256. The C4-type zinc-finger motif lies at 232–256 (CECENCYGVNYKKSLNSKMNICEQC).

This sequence belongs to the AccD/PCCB family. As to quaternary structure, acetyl-CoA carboxylase is a heterohexamer composed of biotin carboxyl carrier protein, biotin carboxylase and 2 subunits each of ACCase subunit alpha and ACCase plastid-coded subunit beta (accD). Zn(2+) serves as cofactor.

The protein localises to the plastid. The protein resides in the chloroplast stroma. It catalyses the reaction N(6)-carboxybiotinyl-L-lysyl-[protein] + acetyl-CoA = N(6)-biotinyl-L-lysyl-[protein] + malonyl-CoA. It participates in lipid metabolism; malonyl-CoA biosynthesis; malonyl-CoA from acetyl-CoA: step 1/1. In terms of biological role, component of the acetyl coenzyme A carboxylase (ACC) complex. Biotin carboxylase (BC) catalyzes the carboxylation of biotin on its carrier protein (BCCP) and then the CO(2) group is transferred by the transcarboxylase to acetyl-CoA to form malonyl-CoA. The protein is Acetyl-coenzyme A carboxylase carboxyl transferase subunit beta, chloroplastic of Gossypium hirsutum (Upland cotton).